The sequence spans 148 residues: Nucleoside diphosphate kinase (148 aa).

ATP contacts are provided by Lys-9, Phe-57, Arg-85, Thr-91, Arg-102, and Asn-112. Thr-91 carries the post-translational modification Phosphothreonine. The active-site Pros-phosphohistidine intermediate is the His-115. Ser-122 is subject to Phosphoserine.

It belongs to the NDK family. In terms of assembly, homotetramer. It depends on Mg(2+) as a cofactor.

The protein resides in the cytoplasm. The enzyme catalyses a 2'-deoxyribonucleoside 5'-diphosphate + ATP = a 2'-deoxyribonucleoside 5'-triphosphate + ADP. It carries out the reaction a ribonucleoside 5'-diphosphate + ATP = a ribonucleoside 5'-triphosphate + ADP. In terms of biological role, major role in the synthesis of nucleoside triphosphates other than ATP. The ATP gamma phosphate is transferred to the NDP beta phosphate via a ping-pong mechanism, using a phosphorylated active-site intermediate. In Bacillus anthracis, this protein is Nucleoside diphosphate kinase.